The primary structure comprises 238 residues: Monocyte to macrophage differentiation factor (238 aa).

The Cytoplasmic segment spans residues 1–28 (MRFRNRFQRFMNHRAPANGRYKPTCYEH). The helical transmembrane segment at 29–49 (AANCYTHAFLIVPAIVGSALL) threads the bilayer. Topologically, residues 50–61 (HRLSDDCWEKIT) are lumenal. The helical transmembrane segment at 62-82 (AWIYGMGLCALFIVSTVFHIV) threads the bilayer. Topologically, residues 83-101 (SWKKSHLRTVEHCFHMCDR) are cytoplasmic. Residues 102–122 (MVIYFFIAASYAPWLNLRELG) form a helical membrane-spanning segment. Position 123 (Pro-123) is a topological domain, lumenal. Residues 124–144 (LASHMRWFIWLMAAGGTIYVF) traverse the membrane as a helical segment. The Cytoplasmic portion of the chain corresponds to 145–151 (LYHEKYK). Residues 152–172 (VVELFFYLTMGFSPALVVTSM) traverse the membrane as a helical segment. Residues 173–174 (NN) lie on the Lumenal side of the membrane. Residues 175–195 (TDGLQELACGGLIYCLGVVFF) traverse the membrane as a helical segment. The Cytoplasmic portion of the chain corresponds to 196 to 198 (KSD). A helical transmembrane segment spans residues 199-219 (GIIPFAHAIWHLFVATAAAVH). The Lumenal portion of the chain corresponds to 220–238 (YYAIWKYLYRSPTDFIRHL).

The protein belongs to the ADIPOR family.

The protein resides in the late endosome membrane. The protein localises to the lysosome membrane. Its function is as follows. Involved in the dynamics of lysosomal membranes associated with microglial activation following brain lesion. This chain is Monocyte to macrophage differentiation factor, found in Mus musculus (Mouse).